The chain runs to 704 residues: MGLARLSLRLRIFLFFAALAMGNLAALVAGLVFGFHKLARPEALSGFVIGGTVAGLVILGLIGVVWALFDANLARPIERLAGSIRARTQTAVDSALDESAGRYLGDLAPAAAAIAQHLNETRSALTEAVQRETTRLAREKDRLETLLSDVPVGVLLCTADHALVFYNGQAVDLLGGAHAPGLDRRVFDYLHPAPIRHAHARLLATADPDAASDLLCATVADGRTLAARMRLISEGEDHQVRRLAGYVLTLRDVSADLRAHAGREALMDELFDRIRRPAAALQSLMGVLIAEDGPADPQARAQLREAARAEAGHLAQAIHSLHDRHEAMRADWWPLAMIRASDFGAAVQARVAAEGAGDLLPVTAALLLRLEGFEMVALIAHLVRRLGPGRAEKRLEVLEDGAGALIALEWRGAAVAIADLELWLSEPLDVGQAEVTGRRVLSVHATDLWPERLHEGRHRLCLPLREARRIGPDPHPVPRPVPRQVVYDFDLLGRGGESALAETPLDKLTFVVFDTETTGLFPTGGDEIVQIAAVRIVNGRRVAGEVFDTLVNPGRPIPAASTAVHGITEAMVATAPAIAEVGRRFHKFAEGAVLVAHNAPFDLEFLRRKELLIGKNFDNPVLDTVLLSAVVFGAAEGHSLDALTHRLGITIPEEARHTALGDTVATAEAFLRLLPALKARGLTTFGAVLTEVRKHGRLMRDMNA.

In terms of domain architecture, PAS spans 139–192; it reads EKDRLETLLSDVPVGVLLCTADHALVFYNGQAVDLLGGAHAPGLDRRVFDYLHP. Residues 511-704 form a DNA-polymerase III epsilon chain-like region; sequence VVFDTETTGL…HGRLMRDMNA (194 aa).

It in the C-terminal section; belongs to the DNA polymerase III epsilon chain family. DNA polymerase III contains a core (composed of alpha, epsilon and theta chains) that associates with a tau subunit. This core dimerizes to form the POLIII' complex. PolIII' associates with the gamma complex (composed of gamma, delta, delta', psi and chi chains) and with the beta chain to form the complete DNA polymerase III complex.

It carries out the reaction DNA(n) + a 2'-deoxyribonucleoside 5'-triphosphate = DNA(n+1) + diphosphate. In terms of biological role, DNA polymerase III is a complex, multichain enzyme responsible for most of the replicative synthesis in bacteria. The epsilon subunit contain the editing function and is a proofreading 3'-5' exonuclease. This Rhodobacter capsulatus (strain ATCC BAA-309 / NBRC 16581 / SB1003) protein is DNA polymerase III subunit epsilon-like protein (dnaQ).